The sequence spans 304 residues: Acetylglutamate kinase (304 aa).

Substrate contacts are provided by residues 69 to 70 (GG), Arg91, and Asn202.

This sequence belongs to the acetylglutamate kinase family. ArgB subfamily.

It localises to the cytoplasm. The enzyme catalyses N-acetyl-L-glutamate + ATP = N-acetyl-L-glutamyl 5-phosphate + ADP. Its pathway is amino-acid biosynthesis; L-arginine biosynthesis; N(2)-acetyl-L-ornithine from L-glutamate: step 2/4. In terms of biological role, catalyzes the ATP-dependent phosphorylation of N-acetyl-L-glutamate. This chain is Acetylglutamate kinase, found in Caulobacter sp. (strain K31).